A 671-amino-acid polypeptide reads, in one-letter code: cGMP-dependent protein kinase 1 (671 aa).

Ser-2 is modified (N-acetylserine). A coiled-coil region spans residues 2 to 59 (SELEEDFAKILMLKEERIKELEKRLSEKEEEIQELKRKLHKCQSVLPVPSTHIGPRTT). The segment at 2–102 (SELEEDFAKI…LIKEAILDND (101 aa)) is required for dimerization. Positions 9 to 44 (AKILMLKEERIKELEKRLSEKEEEIQELKRKLHKCQ) are leucine-zipper. The autoinhibitory domain stretch occupies residues 50 to 75 (PSTHIGPRTTRAQGISAEPQTYRSFH). Residue Thr-59 is modified to Phosphothreonine; by autocatalysis. A cGMP-binding, high affinity region spans residues 103–220 (FMKNLELSQI…EYMEFLKSVP (118 aa)). 3',5'-cyclic GMP is bound by residues 167–170 (GELA), 177–178 (RT), Arg-282, 291–294 (GEKA), 301–302 (RT), and Tyr-336. A cGMP-binding, low affinity region spans residues 221 to 341 (TFQSLPEEIL…SNKAYEDAEA (121 aa)). Residues 360–619 (FNIIDTLGVG…VKDIQKHKWF (260 aa)) form the Protein kinase domain. ATP contacts are provided by residues 366-374 (LGVGGFGRV) and Lys-390. The Proton acceptor role is filled by Asp-484. Residue Thr-515 is modified to Phosphothreonine. Residues 620 to 671 (EGFNWEGLRKGTLTPPIIPSVASPTDTSNFDGFPEDNDEPPPDDNSGWDIDF) form the AGC-kinase C-terminal domain. Residues 635–671 (PIIPSVASPTDTSNFDGFPEDNDEPPPDDNSGWDIDF) form a disordered region. Positions 652–661 (FPEDNDEPPP) are enriched in acidic residues.

The protein belongs to the protein kinase superfamily. AGC Ser/Thr protein kinase family. cGMP subfamily. Isoform alpha: parallel homodimer or heterodimer and also heterotetramer. Interacts directly with PPP1R12A. Non-covalent dimer of dimer of PRKG1-PRKG1 and PPP1R12A-PPP1R12A. This interaction targets PRKG1 to stress fibers to mediate smooth muscle cell relaxation and vasodilation in responses to rises in cGMP. Isoform beta: antiparallel homodimer. Part of cGMP kinase signaling complex at least composed of ACTA2/alpha-actin, CNN1/calponin H1, PLN/phospholamban, PRKG1 and ITPR1. Interacts with IRAG1. Forms a stable complex with ITPR1, IRAG1, and isoform beta of PRKG1. Interacts with TRPC7 (via ankyrin repeat domain). Isoform alpha interacts with RGS2. Interacts with GTF2I. Autophosphorylation increases kinase activity. In terms of processing, 65 kDa monomer is produced by proteolytic cleavage.

The protein resides in the cytoplasm. It carries out the reaction L-seryl-[protein] + ATP = O-phospho-L-seryl-[protein] + ADP + H(+). The catalysed reaction is L-threonyl-[protein] + ATP = O-phospho-L-threonyl-[protein] + ADP + H(+). In the absence of cGMP, PRKG1 activity is suppressed by autoinhibitory contacts. Serine/threonine protein kinase that acts as a key mediator of the nitric oxide (NO)/cGMP signaling pathway. GMP binding activates PRKG1, which phosphorylates serines and threonines on many cellular proteins. Numerous protein targets for PRKG1 phosphorylation are implicated in modulating cellular calcium, but the contribution of each of these targets may vary substantially among cell types. Proteins that are phosphorylated by PRKG1 regulate platelet activation and adhesion, smooth muscle contraction, cardiac function, gene expression, feedback of the NO-signaling pathway, and other processes involved in several aspects of the CNS like axon guidance, hippocampal and cerebellar learning, circadian rhythm and nociception. Smooth muscle relaxation is mediated through lowering of intracellular free calcium, by desensitization of contractile proteins to calcium, and by decrease in the contractile state of smooth muscle or in platelet activation. Regulates intracellular calcium levels via several pathways: phosphorylates IRAG1 and inhibits IP3-induced Ca(2+) release from intracellular stores, phosphorylation of KCNMA1 (BKCa) channels decreases intracellular Ca(2+) levels, which leads to increased opening of this channel. PRKG1 phosphorylates the canonical transient receptor potential channel (TRPC) family which inactivates the associated inward calcium current. Another mode of action of NO/cGMP/PKGI signaling involves PKGI-mediated inactivation of the Ras homolog gene family member A (RhoA). Phosphorylation of RHOA by PRKG1 blocks the action of this protein in myriad processes: regulation of RHOA translocation; decreasing contraction; controlling vesicle trafficking, reduction of myosin light chain phosphorylation resulting in vasorelaxation. Activation of PRKG1 by NO signaling also alters gene expression in a number of tissues. In smooth muscle cells, increased cGMP and PRKG1 activity influence expression of smooth muscle-specific contractile proteins, levels of proteins in the NO/cGMP signaling pathway, down-regulation of the matrix proteins osteopontin and thrombospondin-1 to limit smooth muscle cell migration and phenotype. Regulates vasodilator-stimulated phosphoprotein (VASP) functions in platelets and smooth muscle. In Oryctolagus cuniculus (Rabbit), this protein is cGMP-dependent protein kinase 1 (PRKG1).